The sequence spans 371 residues: MLYFLYDWLSRGGHEHVPVLNLLKYLTFRTGMSMLTAYVVAVAMGSRFIRWMKAKQGKGQPIRADGIARHVVEKAGTPTMGGFMILAGLFVGSLLFADLKNVHVWVVLGITGSFGVLGFMDDYAKVTKQTTAGLSSSQKLIAQFIISILAAVVLIIFAPKSPTTVGLETSVVFPILKNLVINLGWFYVAFAAITIAGFSNAVNLTDGLDGLAIVPVMFAASTFGLIAYLVGNVKFADYLNLHYVPSVGELAVVCGAIIGGGMGFLWYNAPPAKIFMGDTGSLALGGALGSIAVCAKHELVLGIVGGLFVAEALSVMIQVAYFKKTGKRIFLMAPIHHHFEKLGWAESTVVIRFWIVAMMLSFVGLATLKLR.

Transmembrane regions (helical) follow at residues 25–45 (YLTF…VAMG), 79–99 (TMGG…FADL), 104–124 (VWVV…DDYA), 139–159 (KLIA…IFAP), 179–199 (LVIN…AGFS), 210–230 (GLAI…AYLV), 247–267 (VGEL…FLWY), 274–294 (IFMG…IAVC), 299–319 (LVLG…MIQV), and 348–368 (TVVI…LATL).

This sequence belongs to the glycosyltransferase 4 family. MraY subfamily. Mg(2+) serves as cofactor.

It is found in the cell inner membrane. It catalyses the reaction UDP-N-acetyl-alpha-D-muramoyl-L-alanyl-gamma-D-glutamyl-meso-2,6-diaminopimeloyl-D-alanyl-D-alanine + di-trans,octa-cis-undecaprenyl phosphate = di-trans,octa-cis-undecaprenyl diphospho-N-acetyl-alpha-D-muramoyl-L-alanyl-D-glutamyl-meso-2,6-diaminopimeloyl-D-alanyl-D-alanine + UMP. Its pathway is cell wall biogenesis; peptidoglycan biosynthesis. Catalyzes the initial step of the lipid cycle reactions in the biosynthesis of the cell wall peptidoglycan: transfers peptidoglycan precursor phospho-MurNAc-pentapeptide from UDP-MurNAc-pentapeptide onto the lipid carrier undecaprenyl phosphate, yielding undecaprenyl-pyrophosphoryl-MurNAc-pentapeptide, known as lipid I. The protein is Phospho-N-acetylmuramoyl-pentapeptide-transferase of Caulobacter sp. (strain K31).